Here is an 83-residue protein sequence, read N- to C-terminus: Probable insulin-like peptide alpha-type 2 (83 aa).

Positions 1-21 (MHTTTILICFFIFLVQVSTMD) are cleaved as a signal peptide. Cystine bridges form between Cys-32–Cys-66, Cys-44–Cys-79, and Cys-54–Cys-80.

This sequence belongs to the insulin family.

It localises to the secreted. This is Probable insulin-like peptide alpha-type 2 (ins-22) from Caenorhabditis elegans.